The sequence spans 479 residues: Hydrogenase-4 component D (479 aa).

15 helical membrane passes run 3 to 23, 30 to 50, 55 to 75, 80 to 100, 117 to 137, 168 to 188, 208 to 228, 238 to 258, 270 to 290, 300 to 320, 330 to 350, 369 to 389, 390 to 410, 411 to 431, and 458 to 478; these read NLAL…SFSP, WGVL…SAFY, VAVT…LVID, LILF…TGYL, AFLL…TLLG, ALLI…TLFL, LVYG…PMQA, TPIS…YIFA, VIGG…FLMY, LAWS…LSIF, IAYI…AGAL, LPLP…VPPF, NGFF…VEYW, ILLP…AWFI, and LVLI…ATWL.

Belongs to the complex I subunit 5 family.

The protein resides in the cell inner membrane. Functionally, possible component of hydrogenase 4. The chain is Hydrogenase-4 component D from Escherichia coli (strain K12).